The sequence spans 126 residues: Holo-[acyl-carrier-protein] synthase (126 aa).

Residues Asp9 and Glu58 each coordinate Mg(2+).

This sequence belongs to the P-Pant transferase superfamily. AcpS family. Homodimer. The cofactor is Mg(2+).

The protein resides in the cytoplasm. The enzyme catalyses apo-[ACP] + CoA = holo-[ACP] + adenosine 3',5'-bisphosphate + H(+). Functionally, transfers the 4'-phosphopantetheine moiety from coenzyme A to the 'Ser-36' of acyl-carrier-protein. The polypeptide is Holo-[acyl-carrier-protein] synthase (Escherichia coli O157:H7).